The primary structure comprises 702 residues: Elongation factor G (702 aa).

Residues 9 to 292 form the tr-type G domain; it reads DRTRNIGIMA…AVVDYLPSPL (284 aa). GTP contacts are provided by residues 18 to 25, 91 to 95, and 145 to 148; these read AHIDAGKT, DTPGH, and NKMD.

Belongs to the TRAFAC class translation factor GTPase superfamily. Classic translation factor GTPase family. EF-G/EF-2 subfamily.

The protein localises to the cytoplasm. In terms of biological role, catalyzes the GTP-dependent ribosomal translocation step during translation elongation. During this step, the ribosome changes from the pre-translocational (PRE) to the post-translocational (POST) state as the newly formed A-site-bound peptidyl-tRNA and P-site-bound deacylated tRNA move to the P and E sites, respectively. Catalyzes the coordinated movement of the two tRNA molecules, the mRNA and conformational changes in the ribosome. This chain is Elongation factor G, found in Oenococcus oeni (strain ATCC BAA-331 / PSU-1).